The chain runs to 380 residues: Transporter PPE51 (380 aa).

At Met-1 the chain carries N-acetylmethionine.

It belongs to the mycobacterial PPE family. As to quaternary structure, interacts with PE19 and PE25.

It localises to the cell outer membrane. Its function is as follows. Small molecule-selective channel required for the uptake of nutrients across the outer mycomembrane. Transports glycerol and glucose. Involved in sensitivity to M.tuberculosis growth inhibitory agrichemical 3,3-bis-di(methylsulfonyl)propionamide (3bMP1). Transports maltose and lactose disaccharides. Involved in sensitivity to bactericidal thio-disaccharide T-6 compound (1,6-anhydro-3-deoxy-4-S-(2,3,4,6-tetra-O-acetyl-beta-D-glucopyranosyl)-D-glycero-hexopyranos-2-ulose). Transports extracellular trehalose, a component of the cell envelope, and trehalose analog, 6-azido trehalose (6-TreAz), which has antimycobacterial activity. In terms of biological role, plays a role in response to starvation and stress, likely environment within the host. Inhibits canonical autophagy in infected mouse RAW264.7 macrophages. Inhibits autophagy and enhances intracellular bacterial survival when expressed in human macrophage-like THP-1 cells. Inhibits Toll-like receptor 2 (TLR2)-dependent signaling leading to autophagy inhibition, increased intracellular bacterial survival, reduced phagocytosis and reduced secretion of interleukin 6 (IL-6) and IL-1 in infected mouse primary bone marrow-derived macrophage (BMDM) cells. Required for virulence and persistence in the lungs and spleens of intranasally infected C57BL/6J mice. Blocks the antibacterial effects of TLR2 activation, suppresses MHC class II-dependent antigen presentation, and reduces IFN-gamma and TNF-alpha-producing CD4(+) T cells during infection in C57BL/6J mice. This is Transporter PPE51 (PPE51) from Mycobacterium tuberculosis (strain CDC 1551 / Oshkosh).